We begin with the raw amino-acid sequence, 544 residues long: Phosphomannomutase (544 aa).

The active-site Phosphoserine intermediate is Ser-145. Mg(2+)-binding residues include Ser-145, Asp-297, Asp-299, and Asp-301.

It belongs to the phosphohexose mutase family. It depends on Mg(2+) as a cofactor.

The enzyme catalyses alpha-D-mannose 1-phosphate = D-mannose 6-phosphate. The chain is Phosphomannomutase (manB) from Mycoplasmoides pirum (Mycoplasma pirum).